Consider the following 597-residue polypeptide: Elongation factor 4 (597 aa).

A tr-type G domain is found at 2–184 (QHIRNFSIIA…AVISRIPPPK (183 aa)). GTP-binding positions include 14–19 (DHGKST) and 131–134 (NKID).

This sequence belongs to the TRAFAC class translation factor GTPase superfamily. Classic translation factor GTPase family. LepA subfamily.

Its subcellular location is the cell inner membrane. The enzyme catalyses GTP + H2O = GDP + phosphate + H(+). Functionally, required for accurate and efficient protein synthesis under certain stress conditions. May act as a fidelity factor of the translation reaction, by catalyzing a one-codon backward translocation of tRNAs on improperly translocated ribosomes. Back-translocation proceeds from a post-translocation (POST) complex to a pre-translocation (PRE) complex, thus giving elongation factor G a second chance to translocate the tRNAs correctly. Binds to ribosomes in a GTP-dependent manner. The polypeptide is Elongation factor 4 (Nitrosospira multiformis (strain ATCC 25196 / NCIMB 11849 / C 71)).